The chain runs to 103 residues: Small ribosomal subunit protein uS17 (103 aa).

A disordered region spans residues S78 to E103.

The protein belongs to the universal ribosomal protein uS17 family. In terms of assembly, part of the 30S ribosomal subunit.

Its function is as follows. One of the primary rRNA binding proteins, it binds specifically to the 5'-end of 16S ribosomal RNA. The chain is Small ribosomal subunit protein uS17 from Parasynechococcus marenigrum (strain WH8102).